Reading from the N-terminus, the 246-residue chain is UPF0246 protein str1967 (246 aa).

The protein belongs to the UPF0246 family.

This is UPF0246 protein str1967 from Streptococcus thermophilus (strain CNRZ 1066).